A 244-amino-acid chain; its full sequence is Probable phosphatase CA_C0509 (244 aa).

9 residues coordinate Zn(2+): His-8, His-10, His-16, His-41, Glu-74, His-102, His-132, Asp-193, and His-195.

The protein belongs to the PHP family. Zn(2+) serves as cofactor.

This chain is Probable phosphatase CA_C0509, found in Clostridium acetobutylicum (strain ATCC 824 / DSM 792 / JCM 1419 / IAM 19013 / LMG 5710 / NBRC 13948 / NRRL B-527 / VKM B-1787 / 2291 / W).